A 249-amino-acid chain; its full sequence is Bis(5'-nucleosyl)-tetraphosphatase PrpE [asymmetrical] (249 aa).

This sequence belongs to the PrpE family. It depends on Ni(2+) as a cofactor.

It catalyses the reaction P(1),P(4)-bis(5'-guanosyl) tetraphosphate + H2O = GMP + GTP + 2 H(+). Asymmetrically hydrolyzes Ap4p to yield AMP and ATP. This is Bis(5'-nucleosyl)-tetraphosphatase PrpE [asymmetrical] from Bacillus velezensis (strain DSM 23117 / BGSC 10A6 / LMG 26770 / FZB42) (Bacillus amyloliquefaciens subsp. plantarum).